The chain runs to 390 residues: S-adenosylmethionine synthase 2 (390 aa).

Mg(2+) is bound at residue glutamate 9. Histidine 15 is a binding site for ATP. Glutamate 43 contributes to the K(+) binding site. 2 residues coordinate L-methionine: glutamate 56 and glutamine 99. ATP-binding positions include 167–169 (DGK), 235–238 (SGRF), aspartate 246, 252–253 (RK), alanine 269, lysine 273, and lysine 277. Aspartate 246 contacts L-methionine. Lysine 277 lines the L-methionine pocket.

Belongs to the AdoMet synthase family. Homotetramer. Mn(2+) is required as a cofactor. Requires Mg(2+) as cofactor. Co(2+) serves as cofactor. The cofactor is K(+).

It localises to the cytoplasm. It catalyses the reaction L-methionine + ATP + H2O = S-adenosyl-L-methionine + phosphate + diphosphate. The protein operates within amino-acid biosynthesis; S-adenosyl-L-methionine biosynthesis; S-adenosyl-L-methionine from L-methionine: step 1/1. In terms of biological role, catalyzes the formation of S-adenosylmethionine from methionine and ATP. The reaction comprises two steps that are both catalyzed by the same enzyme: formation of S-adenosylmethionine (AdoMet) and triphosphate, and subsequent hydrolysis of the triphosphate. The sequence is that of S-adenosylmethionine synthase 2 (METK2) from Solanum tuberosum (Potato).